We begin with the raw amino-acid sequence, 232 residues long: Triosephosphate isomerase (232 aa).

Position 6–8 (6–8 (NFK)) interacts with substrate. The Electrophile role is filled by histidine 86. Glutamate 155 functions as the Proton acceptor in the catalytic mechanism. Substrate-binding residues include glycine 161 and serine 191.

The protein belongs to the triosephosphate isomerase family. Homodimer.

The protein localises to the cytoplasm. The enzyme catalyses D-glyceraldehyde 3-phosphate = dihydroxyacetone phosphate. The protein operates within carbohydrate biosynthesis; gluconeogenesis. It participates in carbohydrate degradation; glycolysis; D-glyceraldehyde 3-phosphate from glycerone phosphate: step 1/1. Its function is as follows. Involved in the gluconeogenesis. Catalyzes stereospecifically the conversion of dihydroxyacetone phosphate (DHAP) to D-glyceraldehyde-3-phosphate (G3P). The protein is Triosephosphate isomerase of Nitratiruptor sp. (strain SB155-2).